Here is an 822-residue protein sequence, read N- to C-terminus: Probable alpha,alpha-trehalose-phosphate synthase [UDP-forming] 2 (822 aa).

Residues 12-479 (PRLLVVANRL…GLDFMSELNG (468 aa)) form a glycosyltransferase region.

It in the N-terminal section; belongs to the glycosyltransferase 20 family. This sequence in the C-terminal section; belongs to the trehalose phosphatase family.

It catalyses the reaction D-glucose 6-phosphate + UDP-alpha-D-glucose = alpha,alpha-trehalose 6-phosphate + UDP + H(+). In Arabidopsis thaliana (Mouse-ear cress), this protein is Probable alpha,alpha-trehalose-phosphate synthase [UDP-forming] 2 (TPS2).